A 421-amino-acid chain; its full sequence is Adenylosuccinate synthetase (421 aa).

Residues 11–17 and 39–41 contribute to the GTP site; these read GDEGKGK and GHT. The Proton acceptor role is filled by Asp12. Mg(2+)-binding residues include Asp12 and Gly39. Residues 12 to 15, 37 to 40, Thr129, Arg143, Asn219, Thr234, and Arg298 contribute to the IMP site; these read DEGK and NAGH. The active-site Proton donor is His40. Residue 294 to 300 coordinates substrate; that stretch reads VTTGRRR. Residues Arg300, 326-328, and 409-411 contribute to the GTP site; these read KLD and GTG.

This sequence belongs to the adenylosuccinate synthetase family. As to quaternary structure, homodimer. It depends on Mg(2+) as a cofactor.

The protein localises to the cytoplasm. It carries out the reaction IMP + L-aspartate + GTP = N(6)-(1,2-dicarboxyethyl)-AMP + GDP + phosphate + 2 H(+). It participates in purine metabolism; AMP biosynthesis via de novo pathway; AMP from IMP: step 1/2. Plays an important role in the de novo pathway and in the salvage pathway of purine nucleotide biosynthesis. Catalyzes the first committed step in the biosynthesis of AMP from IMP. The chain is Adenylosuccinate synthetase from Paracoccidioides lutzii (strain ATCC MYA-826 / Pb01) (Paracoccidioides brasiliensis).